The following is a 178-amino-acid chain: Large ribosomal subunit protein bL25 (178 aa).

The protein belongs to the bacterial ribosomal protein bL25 family. CTC subfamily. Part of the 50S ribosomal subunit; part of the 5S rRNA/L5/L18/L25 subcomplex. Contacts the 5S rRNA. Binds to the 5S rRNA independently of L5 and L18.

In terms of biological role, this is one of the proteins that binds to the 5S RNA in the ribosome where it forms part of the central protuberance. The protein is Large ribosomal subunit protein bL25 of Campylobacter lari (strain RM2100 / D67 / ATCC BAA-1060).